The sequence spans 256 residues: Ribosomal RNA small subunit methyltransferase A (256 aa).

6 residues coordinate S-adenosyl-L-methionine: histidine 12, leucine 14, glycine 39, glutamate 60, aspartate 81, and asparagine 103.

Belongs to the class I-like SAM-binding methyltransferase superfamily. rRNA adenine N(6)-methyltransferase family. RsmA subfamily.

The protein resides in the cytoplasm. The enzyme catalyses adenosine(1518)/adenosine(1519) in 16S rRNA + 4 S-adenosyl-L-methionine = N(6)-dimethyladenosine(1518)/N(6)-dimethyladenosine(1519) in 16S rRNA + 4 S-adenosyl-L-homocysteine + 4 H(+). Specifically dimethylates two adjacent adenosines (A1518 and A1519) in the loop of a conserved hairpin near the 3'-end of 16S rRNA in the 30S particle. May play a critical role in biogenesis of 30S subunits. The protein is Ribosomal RNA small subunit methyltransferase A of Methylibium petroleiphilum (strain ATCC BAA-1232 / LMG 22953 / PM1).